Here is a 24-residue protein sequence, read N- to C-terminus: Brevinin-1HSa (24 aa).

An intrachain disulfide couples cysteine 18 to cysteine 24.

As to expression, expressed by the skin glands.

Its subcellular location is the secreted. Its function is as follows. Has antibacterial activity against the Gram-positive bacterium S.aureus ATCC 25923 (MIC=3 uM) and the Gram-negative bacterium E.coli ATCC 25726 (MIC=24 uM). The protein is Brevinin-1HSa of Odorrana hosii (Hose's rock frog).